The sequence spans 274 residues: 2,3,4,5-tetrahydropyridine-2,6-dicarboxylate N-succinyltransferase (274 aa).

Belongs to the transferase hexapeptide repeat family.

It localises to the cytoplasm. It carries out the reaction (S)-2,3,4,5-tetrahydrodipicolinate + succinyl-CoA + H2O = (S)-2-succinylamino-6-oxoheptanedioate + CoA. Its pathway is amino-acid biosynthesis; L-lysine biosynthesis via DAP pathway; LL-2,6-diaminopimelate from (S)-tetrahydrodipicolinate (succinylase route): step 1/3. The chain is 2,3,4,5-tetrahydropyridine-2,6-dicarboxylate N-succinyltransferase from Yersinia pseudotuberculosis serotype IB (strain PB1/+).